We begin with the raw amino-acid sequence, 158 residues long: MSRHICWICKLCRDESKRLPSNLTLDEVLKWAQSLESLMATKYGPIVYTAYLKLEHSDENIKFWMACETYKKIASRRGRISRAKKLYNIYIQPQSPREINIDSTTREAIIKSIREPTQTCFEEAQKIVYMHMEMDSYPRFLKSEMYQQLLKTVQSQSS.

Residues 34 to 150 (SLESLMATKY…LKSEMYQQLL (117 aa)) enclose the RGS domain.

Inhibits signal transduction by increasing the GTPase activity of G protein alpha subunits thereby driving them into their inactive GDP-bound form. Binds to both G(i)-alpha and G(q)-alpha. This is Regulator of G-protein signaling 13 (Rgs13) from Mus musculus (Mouse).